Reading from the N-terminus, the 219-residue chain is Carboxypeptidase Y inhibitor (219 aa).

M1 is subject to N-acetylmethionine.

It belongs to the phosphatidylethanolamine-binding protein family. As to quaternary structure, monomer.

Its subcellular location is the cytoplasm. Its function is as follows. Specific and potent inhibitor of carboxypeptidase Y. In Saccharomyces cerevisiae (strain ATCC 204508 / S288c) (Baker's yeast), this protein is Carboxypeptidase Y inhibitor (TFS1).